A 1059-amino-acid polypeptide reads, in one-letter code: Carbamoyl phosphate synthase large chain (1059 aa).

The carboxyphosphate synthetic domain stretch occupies residues 1–401 (MPKRQDISKI…AMLKAVRSLE (401 aa)). Positions 129, 169, 175, 176, 208, 210, 215, 241, 242, 243, 284, and 298 each coordinate ATP. Positions 133–327 (KALMERLNEP…IAKMAAKIAV (195 aa)) constitute an ATP-grasp 1 domain. Positions 284, 298, and 300 each coordinate Mg(2+). 3 residues coordinate Mn(2+): Q284, E298, and N300. The oligomerization domain stretch occupies residues 402 to 546 (IGAIGLDDIT…YATYEQENES (145 aa)). The tract at residues 547 to 929 (IISTKKSVLV…ALYKAFIASN (383 aa)) is carbamoyl phosphate synthetic domain. The ATP-grasp 2 domain maps to 671–861 (DQVIKELALP…LAQLATRVML (191 aa)). ATP-binding residues include R707, S746, L748, E752, G777, V778, H779, S780, Q820, and E832. 3 residues coordinate Mg(2+): Q820, E832, and N834. Residues Q820, E832, and N834 each contribute to the Mn(2+) site. The 130-residue stretch at 930 to 1059 (IKVPRYGNVL…SRSFTVKEMH (130 aa)) folds into the MGS-like domain. The allosteric domain stretch occupies residues 930–1059 (IKVPRYGNVL…SRSFTVKEMH (130 aa)).

This sequence belongs to the CarB family. As to quaternary structure, composed of two chains; the small (or glutamine) chain promotes the hydrolysis of glutamine to ammonia, which is used by the large (or ammonia) chain to synthesize carbamoyl phosphate. Tetramer of heterodimers (alpha,beta)4. It depends on Mg(2+) as a cofactor. The cofactor is Mn(2+).

It carries out the reaction hydrogencarbonate + L-glutamine + 2 ATP + H2O = carbamoyl phosphate + L-glutamate + 2 ADP + phosphate + 2 H(+). The catalysed reaction is hydrogencarbonate + NH4(+) + 2 ATP = carbamoyl phosphate + 2 ADP + phosphate + 2 H(+). It participates in amino-acid biosynthesis; L-arginine biosynthesis; carbamoyl phosphate from bicarbonate: step 1/1. The protein operates within pyrimidine metabolism; UMP biosynthesis via de novo pathway; (S)-dihydroorotate from bicarbonate: step 1/3. Large subunit of the glutamine-dependent carbamoyl phosphate synthetase (CPSase). CPSase catalyzes the formation of carbamoyl phosphate from the ammonia moiety of glutamine, carbonate, and phosphate donated by ATP, constituting the first step of 2 biosynthetic pathways, one leading to arginine and/or urea and the other to pyrimidine nucleotides. The large subunit (synthetase) binds the substrates ammonia (free or transferred from glutamine from the small subunit), hydrogencarbonate and ATP and carries out an ATP-coupled ligase reaction, activating hydrogencarbonate by forming carboxy phosphate which reacts with ammonia to form carbamoyl phosphate. The polypeptide is Carbamoyl phosphate synthase large chain (Leuconostoc mesenteroides subsp. mesenteroides (strain ATCC 8293 / DSM 20343 / BCRC 11652 / CCM 1803 / JCM 6124 / NCDO 523 / NBRC 100496 / NCIMB 8023 / NCTC 12954 / NRRL B-1118 / 37Y)).